The chain runs to 91 residues: Mercuric transport protein periplasmic component (91 aa).

A signal peptide spans 1–19 (MKKLLSALALAAVVAPVWA). Residues 22 to 88 (QTVTLSVPGM…ATEDAGYPSS (67 aa)) enclose the HMA domain. Hg(2+)-binding residues include C33 and C36.

It belongs to the MerP family. Monomer.

It localises to the periplasm. Involved in mercury resistance. Acts as a mercury scavenger that specifically binds to a mercuric ion in the periplasm and probably passes it to the cytoplasmic mercuric reductase MerA via the mercuric transport protein MerT. This Pseudomonas fluorescens protein is Mercuric transport protein periplasmic component.